The sequence spans 177 residues: R-phycoerythrin beta chain (177 aa).

The phycourobilin site is built by C50 and C61. Position 72 is an N4-methylasparagine (N72). C82 and C158 together coordinate (2R,3E)-phycoerythrobilin.

It belongs to the phycobiliprotein family. In terms of assembly, heterodimer of an alpha and a beta chain. Post-translationally, contains two covalently linked phycoerythrobilin chromophores and one covalently linked phycourobilin chromophore.

It is found in the plastid. The protein resides in the chloroplast thylakoid membrane. Functionally, light-harvesting photosynthetic bile pigment-protein from the phycobiliprotein complex. This chain is R-phycoerythrin beta chain (cpeB), found in Pyropia haitanensis (Red seaweed).